The following is a 69-amino-acid chain: MSVLTSLLLRGLTGSARWLPVPRAKVHSMPPEVELGIMEKAIGLTSCFVSLFLPAGWILSHLEDYKRPE.

A mitochondrion-targeting transit peptide spans 1–25 (MSVLTSLLLRGLTGSARWLPVPRAK). Residues 2 to 19 (SVLTSLLLRGLTGSARWL) carry the SIFI-degron motif. Residues 26 to 36 (VHSMPPEVELG) lie on the Mitochondrial matrix side of the membrane. The chain crosses the membrane as a helical span at residues 37–60 (IMEKAIGLTSCFVSLFLPAGWILS). Over 61–69 (HLEDYKRPE) the chain is Mitochondrial intermembrane.

This sequence belongs to the cytochrome c oxidase VIII family. Component of the cytochrome c oxidase (complex IV, CIV), a multisubunit enzyme composed of 14 subunits. The complex is composed of a catalytic core of 3 subunits MT-CO1, MT-CO2 and MT-CO3, encoded in the mitochondrial DNA, and 11 supernumerary subunits COX4I, COX5A, COX5B, COX6A, COX6B, COX6C, COX7A, COX7B, COX7C, COX8 and NDUFA4, which are encoded in the nuclear genome. The complex exists as a monomer or a dimer and forms supercomplexes (SCs) in the inner mitochondrial membrane with NADH-ubiquinone oxidoreductase (complex I, CI) and ubiquinol-cytochrome c oxidoreductase (cytochrome b-c1 complex, complex III, CIII), resulting in different assemblies (supercomplex SCI(1)III(2)IV(1) and megacomplex MCI(2)III(2)IV(2)). Post-translationally, in response to mitochondrial stress, the precursor protein is ubiquitinated by the SIFI complex in the cytoplasm before mitochondrial import, leading to its degradation. Within the SIFI complex, UBR4 initiates ubiquitin chain that are further elongated or branched by KCMF1.

The protein localises to the mitochondrion inner membrane. It functions in the pathway energy metabolism; oxidative phosphorylation. Component of the cytochrome c oxidase, the last enzyme in the mitochondrial electron transport chain which drives oxidative phosphorylation. The respiratory chain contains 3 multisubunit complexes succinate dehydrogenase (complex II, CII), ubiquinol-cytochrome c oxidoreductase (cytochrome b-c1 complex, complex III, CIII) and cytochrome c oxidase (complex IV, CIV), that cooperate to transfer electrons derived from NADH and succinate to molecular oxygen, creating an electrochemical gradient over the inner membrane that drives transmembrane transport and the ATP synthase. Cytochrome c oxidase is the component of the respiratory chain that catalyzes the reduction of oxygen to water. Electrons originating from reduced cytochrome c in the intermembrane space (IMS) are transferred via the dinuclear copper A center (CU(A)) of subunit 2 and heme A of subunit 1 to the active site in subunit 1, a binuclear center (BNC) formed by heme A3 and copper B (CU(B)). The BNC reduces molecular oxygen to 2 water molecules using 4 electrons from cytochrome c in the IMS and 4 protons from the mitochondrial matrix. The protein is Cytochrome c oxidase subunit 8A, mitochondrial (COX8A) of Macaca silenus (Lion-tailed macaque).